Reading from the N-terminus, the 181-residue chain is Inorganic pyrophosphatase (181 aa).

The substrate site is built by lysine 16, arginine 30, and tyrosine 42. Positions 52, 57, and 89 each coordinate Mg(2+). Tyrosine 126 serves as a coordination point for substrate.

This sequence belongs to the PPase family. In terms of assembly, homohexamer. Requires Mg(2+) as cofactor.

It is found in the cytoplasm. It catalyses the reaction diphosphate + H2O = 2 phosphate + H(+). Catalyzes the hydrolysis of inorganic pyrophosphate (PPi) forming two phosphate ions. The chain is Inorganic pyrophosphatase from Malacoplasma penetrans (strain HF-2) (Mycoplasma penetrans).